The following is a 197-amino-acid chain: Phosphoheptose isomerase (197 aa).

The SIS domain occupies 36 to 197; that stretch reads MVNALLNEGK…IDSQLFGSEE (162 aa). 51–53 lines the substrate pocket; that stretch reads NGG. The Zn(2+) site is built by H60 and E64. Substrate is bound by residues E64, 93 to 94, 119 to 121, S124, and Q174; these read ND and STS. Q174 and H182 together coordinate Zn(2+).

It belongs to the SIS family. GmhA subfamily. Homotetramer. It depends on Zn(2+) as a cofactor.

It localises to the cytoplasm. It carries out the reaction 2 D-sedoheptulose 7-phosphate = D-glycero-alpha-D-manno-heptose 7-phosphate + D-glycero-beta-D-manno-heptose 7-phosphate. It functions in the pathway carbohydrate biosynthesis; D-glycero-D-manno-heptose 7-phosphate biosynthesis; D-glycero-alpha-D-manno-heptose 7-phosphate and D-glycero-beta-D-manno-heptose 7-phosphate from sedoheptulose 7-phosphate: step 1/1. Catalyzes the isomerization of sedoheptulose 7-phosphate in D-glycero-D-manno-heptose 7-phosphate. The sequence is that of Phosphoheptose isomerase from Pseudomonas fluorescens (strain SBW25).